We begin with the raw amino-acid sequence, 277 residues long: S-formylglutathione hydrolase FrmB (277 aa).

Catalysis depends on charge relay system residues Ser-145, Asp-221, and His-254.

This sequence belongs to the esterase D family.

It catalyses the reaction S-formylglutathione + H2O = formate + glutathione + H(+). Its function is as follows. Serine hydrolase involved in the detoxification of formaldehyde. Hydrolyzes S-formylglutathione to glutathione and formate. The sequence is that of S-formylglutathione hydrolase FrmB (frmB) from Escherichia coli O1:K1 / APEC.